The following is a 358-amino-acid chain: DNA-directed RNA polymerase subunit alpha (358 aa).

Residues 1-231 are alpha N-terminal domain (alpha-NTD); that stretch reads MIQNVTDDKI…NIFLSLSNSS (231 aa). An alpha C-terminal domain (alpha-CTD) region spans residues 266–358; sequence QESLGWKKIS…LELINNKDIS (93 aa).

It belongs to the RNA polymerase alpha chain family. In plastids the minimal PEP RNA polymerase catalytic core is composed of four subunits: alpha, beta, beta', and beta''. When a (nuclear-encoded) sigma factor is associated with the core the holoenzyme is formed, which can initiate transcription.

Its subcellular location is the plastid. The protein localises to the chloroplast. It carries out the reaction RNA(n) + a ribonucleoside 5'-triphosphate = RNA(n+1) + diphosphate. In terms of biological role, DNA-dependent RNA polymerase catalyzes the transcription of DNA into RNA using the four ribonucleoside triphosphates as substrates. In Chara vulgaris (Common stonewort), this protein is DNA-directed RNA polymerase subunit alpha.